The chain runs to 520 residues: Pantetheine hydrolase VNN2 (520 aa).

Positions 1-22 (MVTSSFPISVAVFALITLQVGT) are cleaved as a signal peptide. A CN hydrolase domain is found at 31–306 (YEHAVILPNK…GKLLLSEVDS (276 aa)). N-linked (GlcNAc...) asparagine glycosylation is present at asparagine 39. Glutamate 80 functions as the Proton acceptor in the catalytic mechanism. Lysine 179 functions as the Proton donor in the catalytic mechanism. The Nucleophile role is filled by cysteine 211. N-linked (GlcNAc...) asparagine glycosylation is found at asparagine 273, asparagine 347, asparagine 357, asparagine 411, and asparagine 468. Cysteine 493 carries the GPI-anchor amidated cysteine lipid modification. Residues 494–520 (GTSNSAITYLLIFILLMIIALQNIVML) constitute a propeptide, removed in mature form.

The protein belongs to the carbon-nitrogen hydrolase superfamily. BTD/VNN family. In terms of tissue distribution, widely expressed with higher expression in spleen and blood.

Its subcellular location is the cell membrane. The catalysed reaction is (R)-pantetheine + H2O = cysteamine + (R)-pantothenate. Functionally, amidohydrolase that hydrolyzes specifically one of the carboamide linkages in D-pantetheine thus recycling pantothenic acid (vitamin B5) and releasing cysteamine. Involved in the thymus homing of bone marrow cells. May regulate beta-2 integrin-mediated cell adhesion, migration and motility of neutrophil. The polypeptide is Pantetheine hydrolase VNN2 (Homo sapiens (Human)).